The following is a 370-amino-acid chain: MGLWALLPGWVSATLLLALAALPAALAANSSGRWWGIVNVASSTNLLTDSKSLQLVLEPSLQLLSRKQRRLIRQNPGILHSVSGGLQSAVRECKWQFRNRRWNCPTAPGPHLFGKIVNRGCRETAFIFAITSAGVTHSVARSCSEGSIESCTCDYRRRGPGGPDWHWGGCSDNIDFGRLFGREFVDSGEKGRDLRFLMNLHNNEAGRTTVFSEMRQECKCHGMSGSCTVRTCWMRLPTLRAVGDVLRDRFDGASRVLYGNRGSNRASRAELLRLEPEDPAHKPPSPHDLVYFEKSPNFCTYSGRLGTAGTAGRACNSSSPALDGCELLCCGRGHRTRTQRVTERCNCTFHWCCHVSCRNCTHTRVLHECL.

The first 27 residues, methionine 1–alanine 27, serve as a signal peptide directing secretion. N-linked (GlcNAc...) asparagine glycosylation is present at asparagine 29. 11 disulfides stabilise this stretch: cysteine 93–cysteine 104, cysteine 143–cysteine 151, cysteine 153–cysteine 170, cysteine 218–cysteine 232, cysteine 220–cysteine 227, cysteine 299–cysteine 330, cysteine 315–cysteine 325, cysteine 329–cysteine 369, cysteine 345–cysteine 360, cysteine 347–cysteine 357, and cysteine 352–cysteine 353. Serine 224 is lipidated: O-palmitoleoyl serine; by PORCN. 2 N-linked (GlcNAc...) asparagine glycosylation sites follow: asparagine 316 and asparagine 346. N-linked (GlcNAc...) asparagine glycosylation occurs at asparagine 359.

It belongs to the Wnt family. In terms of assembly, forms a soluble 1:1 complex with AFM; this prevents oligomerization and is required for prolonged biological activity. The complex with AFM may represent the physiological form in body fluids. Interacts with PORCN. Interacts with RSPO1, RSPO2 and RSPO3. Interacts with WLS. Post-translationally, palmitoleoylation is required for efficient binding to frizzled receptors. Palmitoleoylation is necessary for proper trafficking to cell surface. Depalmitoleoylated by NOTUM, leading to inhibit Wnt signaling pathway.

The protein localises to the secreted. It is found in the extracellular space. It localises to the extracellular matrix. In terms of biological role, ligand for members of the frizzled family of seven transmembrane receptors. Acts in the canonical Wnt signaling pathway by promoting beta-catenin-dependent transcriptional activation. In some developmental processes, is also a ligand for the coreceptor RYK, thus triggering Wnt signaling. Plays an essential role in the development of the embryonic brain and central nervous system (CNS). Has a role in osteoblast function, bone development and bone homeostasis. In Homo sapiens (Human), this protein is Proto-oncogene Wnt-1 (WNT1).